Consider the following 266-residue polypeptide: Glucosamine-6-phosphate deaminase (266 aa).

Asp-72 functions as the Proton acceptor; for enolization step in the catalytic mechanism. Asp-141 acts as the For ring-opening step in catalysis. His-143 functions as the Proton acceptor; for ring-opening step in the catalytic mechanism. The active-site For ring-opening step is Glu-148.

Belongs to the glucosamine/galactosamine-6-phosphate isomerase family. NagB subfamily. As to quaternary structure, homohexamer.

The catalysed reaction is alpha-D-glucosamine 6-phosphate + H2O = beta-D-fructose 6-phosphate + NH4(+). Its pathway is amino-sugar metabolism; N-acetylneuraminate degradation; D-fructose 6-phosphate from N-acetylneuraminate: step 5/5. With respect to regulation, allosterically activated by N-acetylglucosamine 6-phosphate (GlcNAc6P). Functionally, catalyzes the reversible isomerization-deamination of glucosamine 6-phosphate (GlcN6P) to form fructose 6-phosphate (Fru6P) and ammonium ion. The chain is Glucosamine-6-phosphate deaminase from Edwardsiella ictaluri (strain 93-146).